A 740-amino-acid chain; its full sequence is DNA ligase (740 aa).

The segment at 1–20 is disordered; that stretch reads MGPGLTLSGMTEQSSLFPAP. NAD(+) contacts are provided by residues 56–60, 105–106, and Glu-142; these read DAEYD and SI. Lys-144 functions as the N6-AMP-lysine intermediate in the catalytic mechanism. Positions 165, 201, 322, and 346 each coordinate NAD(+). Zn(2+) is bound by residues Cys-471, Cys-474, Cys-489, and Cys-495. In terms of domain architecture, BRCT spans 654-740; the sequence is AATLPLAGMT…RGAPPNAGGG (87 aa).

It belongs to the NAD-dependent DNA ligase family. LigA subfamily. Mg(2+) is required as a cofactor. Mn(2+) serves as cofactor.

It catalyses the reaction NAD(+) + (deoxyribonucleotide)n-3'-hydroxyl + 5'-phospho-(deoxyribonucleotide)m = (deoxyribonucleotide)n+m + AMP + beta-nicotinamide D-nucleotide.. DNA ligase that catalyzes the formation of phosphodiester linkages between 5'-phosphoryl and 3'-hydroxyl groups in double-stranded DNA using NAD as a coenzyme and as the energy source for the reaction. It is essential for DNA replication and repair of damaged DNA. The polypeptide is DNA ligase (Acidovorax ebreus (strain TPSY) (Diaphorobacter sp. (strain TPSY))).